Reading from the N-terminus, the 318-residue chain is Aspartate carbamoyltransferase catalytic subunit (318 aa).

Carbamoyl phosphate is bound by residues Arg-57 and Thr-58. Lys-85 is an L-aspartate binding site. Carbamoyl phosphate is bound by residues Arg-107, His-141, and Gln-144. L-aspartate is bound by residues Arg-174 and Arg-228. Residues Gly-269 and Pro-270 each contribute to the carbamoyl phosphate site.

Belongs to the aspartate/ornithine carbamoyltransferase superfamily. ATCase family. Heterododecamer (2C3:3R2) of six catalytic PyrB chains organized as two trimers (C3), and six regulatory PyrI chains organized as three dimers (R2).

The enzyme catalyses carbamoyl phosphate + L-aspartate = N-carbamoyl-L-aspartate + phosphate + H(+). Its pathway is pyrimidine metabolism; UMP biosynthesis via de novo pathway; (S)-dihydroorotate from bicarbonate: step 2/3. Catalyzes the condensation of carbamoyl phosphate and aspartate to form carbamoyl aspartate and inorganic phosphate, the committed step in the de novo pyrimidine nucleotide biosynthesis pathway. The sequence is that of Aspartate carbamoyltransferase catalytic subunit from Mycolicibacterium smegmatis (strain ATCC 700084 / mc(2)155) (Mycobacterium smegmatis).